The sequence spans 129 residues: Small ribosomal subunit protein uS9 (129 aa).

It belongs to the universal ribosomal protein uS9 family.

This is Small ribosomal subunit protein uS9 from Chlorobium phaeobacteroides (strain DSM 266 / SMG 266 / 2430).